Consider the following 171-residue polypeptide: Shikimate kinase (171 aa).

ATP is bound at residue 14-19 (GAGKST). Position 18 (serine 18) interacts with Mg(2+). Residues aspartate 36, arginine 60, and glycine 82 each coordinate substrate. An ATP-binding site is contributed by arginine 120. Arginine 139 contacts substrate. Residue glutamine 156 participates in ATP binding.

Belongs to the shikimate kinase family. In terms of assembly, monomer. Requires Mg(2+) as cofactor.

It localises to the cytoplasm. It carries out the reaction shikimate + ATP = 3-phosphoshikimate + ADP + H(+). It participates in metabolic intermediate biosynthesis; chorismate biosynthesis; chorismate from D-erythrose 4-phosphate and phosphoenolpyruvate: step 5/7. Its function is as follows. Catalyzes the specific phosphorylation of the 3-hydroxyl group of shikimic acid using ATP as a cosubstrate. The protein is Shikimate kinase of Shewanella pealeana (strain ATCC 700345 / ANG-SQ1).